The chain runs to 295 residues: Probable ketoamine kinase slr1563 (295 aa).

99-101 is a binding site for ATP; the sequence is EWL. Asp201 functions as the Proton acceptor in the catalytic mechanism.

This sequence belongs to the fructosamine kinase family.

Functionally, ketoamine kinase that phosphorylates ketoamines on the third carbon of the sugar moiety to generate ketoamine 3-phosphate. This chain is Probable ketoamine kinase slr1563, found in Synechocystis sp. (strain ATCC 27184 / PCC 6803 / Kazusa).